Here is a 750-residue protein sequence, read N- to C-terminus: MIEEMRKLLATLDDGEISPSAYDTAWVARIPSQSNATCPEFPETLEWIAHNQLPDGSWGDRNHFQIYDRVLSTVSCLVALKTWNLGHDNINKGERFLKQNIYKLTKDKGDLLCGFELIFMTMLEEAKQKGLDIPIDIPALKILQGYRQKKLQKIPLEMVHSIPTTILYSLEGLQDHINWEKILQFIGTDGSFLSSPSATACVYMHTKDPRCLEYLKGVVKKVKNSVPCQYAIDLFERLWIVDTLERLGIDRYFQPEIKNILDYVYKYWSDKKGIGWGRESYLKDIDDTSMGFRLLRLHGYKVTPDVFLNFMSSEDKFFCFPGESYHGASDIFNLYRASQVAFANDNILTKAKNYAHKYLSQLDKAYLDKWSAKKNFFQEVEFELSNQWNSCLPRAYSKSYIHNYGPNDIWIAKTIYRLPFVNNELFINLAKEDFNACQSIHQSEIQTLLRWWAALKFGDLPFFGDKVVTAHFSIASCMFEPEFSELRLFYTKYALLSSTLDDLADYYGSPAQTRCILEAIRSWDPSLVSHLSEEVQICFSGLYRTINEMVKSASKVQTGSSINIREHMQEQLAKLISAQLVDAEWMERKHIPSFETYLSNATVSVGMQDLLLSSIFFCGESISKHLMQEIKNSRCLQLTCLIARLCNDIGTYQFEREKGEVASSITCYMRENRGITESQAIEHLQGIIDESWKELTEEFLTPSQIPRSIKRLMFETARIFQFIYPKKDNFKDPSKAMASLIQNVLYKPAE.

Mg(2+) is bound by residues Asp284, Asp286, Asp501, Asp505, Asn647, Thr651, and Glu655. Positions 284-287 (DIDD) match the DXDD motif motif. The short motif at 501 to 505 (DDLAD) is the DDXXD motif element.

It belongs to the terpene synthase family. Mg(2+) serves as cofactor.

The enzyme catalyses geranylgeranyl diphosphate + H2O = (13E)-labda-7,13-dien-15-ol + diphosphate. It participates in secondary metabolite biosynthesis; terpenoid biosynthesis. In terms of biological role, bifunctional diterpene synthase that directly generates the endocyclic double bond, as well as the hydroxyl group: produces an endocyclic double bond isomer of copalyl diphosphate (CPP), and carries out subsequent replacement of the diphosphate by a hydroxyl group to form (13E)-labda-7,13-dien-15-ol. The polypeptide is (13E)-labda-7,13-dien-15-ol synthase (Selaginella moellendorffii (Spikemoss)).